Consider the following 252-residue polypeptide: CLAVATA3/ESR (CLE)-related protein 4A-1 (252 aa).

Positions 1-21 are cleaved as a signal peptide; that stretch reads MAKNAMLCLLILRVVLALAFA. Residues 21–83 form a required for secretion from the host cytoplasm to the host apoplasm region; the sequence is ATNKKGDEEP…SNQLPNNNWM (63 aa). N-linked (GlcNAc...) asparagine glycosylation is present at Asn32. The interval 116-252 is disordered; it reads RKTGMHSQRH…APAGPDPIHH (137 aa). Composition is skewed to basic and acidic residues over residues 125-137 and 144-242; these read HHEE…EKRV and PIHH…EKRG. One copy of the A-1 repeat lies at 127 to 135; the sequence is EETTLEQEK. Positions 127-219 are 6 X approximate repeat A; sequence EETTLEQEKR…HEETTLEQEK (93 aa). One copy of the CLE-1 repeat lies at 136–147; sequence RVAGAGPDPIHH. The segment at 136–252 is 6 X approximate repeat CLE; it reads RVAGAGPDPI…APAGPDPIHH (117 aa). One copy of the A-2 repeat lies at 148–156; it reads QDTTLEQEK. A CLE-2 repeat occupies 157–168; sequence RAVPAGPDPKHH. An A-3 repeat occupies 169-177; that stretch reads EETTLEQEK. The CLE-3 repeat unit spans residues 178–189; that stretch reads RAVPAGPDPKHH. An A-4 repeat occupies 190–198; the sequence is EETTLEQEK. Residues 199-210 form a CLE-4 repeat; that stretch reads RAVPAGPDPKHH. The stretch at 211-219 is one A-5 repeat; it reads EETTLEQEK. The stretch at 220-231 is one CLE-5 repeat; it reads RAVPAGPDPKHH. One copy of the A-6 repeat lies at 232-240; the sequence is EETTFEQEK. Residues 241–252 form a CLE-6 repeat; that stretch reads RGAPAGPDPIHH.

The protein belongs to the CLV3/ESR signal peptide family. Highly expressed exclusively within the dorsal esophageal gland cell during syncytium formation in host plants.

The protein resides in the secreted. It is found in the host cytoplasm. It localises to the host extracellular space. The protein localises to the extracellular space. Its subcellular location is the apoplast. Mimics host plant CLE extracellular signal peptides that regulate cell fate. May play a role in the differentiation or division of feeding cells (syncytia) induced in plant roots during infection. The polypeptide is CLAVATA3/ESR (CLE)-related protein 4A-1 (CLE-4A-1) (Globodera rostochiensis (Golden nematode worm)).